A 501-amino-acid polypeptide reads, in one-letter code: Cytochrome P450 3A31 (501 aa).

Residue Cys-440 participates in heme binding.

It belongs to the cytochrome P450 family. The cofactor is heme. As to expression, expressed constitutively in liver.

It is found in the endoplasmic reticulum membrane. It localises to the microsome membrane. The catalysed reaction is an organic molecule + reduced [NADPH--hemoprotein reductase] + O2 = an alcohol + oxidized [NADPH--hemoprotein reductase] + H2O + H(+). Cytochromes P450 are a group of heme-thiolate monooxygenases. In liver microsomes, this enzyme is involved in an NADPH-dependent electron transport pathway. It oxidizes a variety of structurally unrelated compounds, including steroids, fatty acids, and xenobiotics. This is Cytochrome P450 3A31 (CYP3A31) from Mesocricetus auratus (Golden hamster).